The primary structure comprises 215 residues: Ribosomal RNA small subunit methyltransferase G (215 aa).

Residues Gly78, Leu83, 128-129, and Arg146 contribute to the S-adenosyl-L-methionine site; that span reads AE.

The protein belongs to the methyltransferase superfamily. RNA methyltransferase RsmG family.

The protein localises to the cytoplasm. The enzyme catalyses guanosine(527) in 16S rRNA + S-adenosyl-L-methionine = N(7)-methylguanosine(527) in 16S rRNA + S-adenosyl-L-homocysteine. Functionally, specifically methylates the N7 position of guanine in position 527 of 16S rRNA. The chain is Ribosomal RNA small subunit methyltransferase G from Anaeromyxobacter sp. (strain Fw109-5).